The chain runs to 515 residues: 2,3-bisphosphoglycerate-independent phosphoglycerate mutase (515 aa).

Asp14 and Ser64 together coordinate Mn(2+). The active-site Phosphoserine intermediate is the Ser64. Substrate is bound by residues His125, 155-156 (RD), Arg187, Arg193, 263-266 (RADR), and Lys337. Asp404, His408, Asp445, His446, and His464 together coordinate Mn(2+).

This sequence belongs to the BPG-independent phosphoglycerate mutase family. As to quaternary structure, monomer. The cofactor is Mn(2+).

It carries out the reaction (2R)-2-phosphoglycerate = (2R)-3-phosphoglycerate. It participates in carbohydrate degradation; glycolysis; pyruvate from D-glyceraldehyde 3-phosphate: step 3/5. Its function is as follows. Catalyzes the interconversion of 2-phosphoglycerate and 3-phosphoglycerate. The polypeptide is 2,3-bisphosphoglycerate-independent phosphoglycerate mutase (Pseudomonas paraeruginosa (strain DSM 24068 / PA7) (Pseudomonas aeruginosa (strain PA7))).